The sequence spans 325 residues: Aldo-keto reductase family 1 member A1 (325 aa).

Residue T2 is modified to N-acetylthreonine. Phosphoserine is present on S4. NADP(+) contacts are provided by residues 11-20 (GQKMPLIGLG), T21, and W22. N-linked (Glc) (glycation) lysine glycosylation occurs at K23. At S38 the chain carries Phosphoserine. Position 45 (D45) interacts with NADP(+). Y50 (proton donor) is an active-site residue. Residues K68 and K85 are each glycosylated (N-linked (Glc) (glycation) lysine). The residue at position 127 (K127) is an N6-acetyllysine; alternate. N6-succinyllysine; alternate is present on K127. N-linked (Glc) (glycation) lysine glycosylation occurs at K141. K145 carries the N6-succinyllysine modification. K153 is a glycosylation site (N-linked (Glc) (glycation) lysine). Positions 162, 163, 211, 213, 215, 216, 263, 264, 265, 266, 269, 272, and 273 each coordinate NADP(+). S211 is modified (phosphoserine).

It belongs to the aldo/keto reductase family. Monomer. As to expression, widely expressed.

It localises to the cytoplasm. The protein resides in the cytosol. It is found in the apical cell membrane. It catalyses the reaction a primary alcohol + NADP(+) = an aldehyde + NADPH + H(+). It carries out the reaction L-gulonate + NADP(+) = aldehydo-D-glucuronate + NADPH + H(+). The catalysed reaction is L-gulono-1,4-lactone + NADP(+) = D-glucurono-3,6-lactone + NADPH + H(+). The enzyme catalyses allyl alcohol + NADP(+) = acrolein + NADPH + H(+). It catalyses the reaction glycerol + NADP(+) = D-glyceraldehyde + NADPH + H(+). It carries out the reaction glycerol + NADP(+) = L-glyceraldehyde + NADPH + H(+). The catalysed reaction is hydroxyacetone + NADP(+) = methylglyoxal + NADPH + H(+). The enzyme catalyses 3-deoxyfructose + NADP(+) = 3-deoxyglucosone + NADPH + H(+). It catalyses the reaction (R)-mevalonate + NADP(+) = (R)-mevaldate + NADPH + H(+). It carries out the reaction pyridine 3-methanol + NADP(+) = pyridine-3-carbaldehyde + NADPH + H(+). The catalysed reaction is S-nitroso-CoA + NADPH + H(+) = sulfinamide-CoA + NADP(+). The enzyme catalyses S-nitrosoglutathione + NADPH + H(+) = S-(hydroxysulfenamide)glutathione + NADP(+). Catalyzes the NADPH-dependent reduction of a wide variety of carbonyl-containing compounds to their corresponding alcohols. Displays enzymatic activity towards endogenous metabolites such as aromatic and aliphatic aldehydes, ketones, monosaccharides and bile acids. Plays an important role in ascorbic acid biosynthesis by catalyzing the reduction of D-glucuronic acid and D-glucurono-gamma-lactone. Functions as a detoxifiying enzyme by reducing a range of toxic aldehydes. Reduces methylglyoxal and 3-deoxyglucosone, which are present at elevated levels under hyperglycemic conditions and are cytotoxic. Involved also in the detoxification of lipid-derived aldehydes like acrolein. Plays a role in the activation of procarcinogens, such as polycyclic aromatic hydrocarbon trans-dihydrodiols, and in the metabolism of various xenobiotics and drugs. Also acts as an inhibitor of protein S-nitrosylation by mediating degradation of S-nitroso-coenzyme A (S-nitroso-CoA), a cofactor required to S-nitrosylate proteins. S-nitroso-CoA reductase activity is involved in reprogramming intermediary metabolism in renal proximal tubules, notably by inhibiting protein S-nitrosylation of isoform 2 of PKM (PKM2). Also acts as a S-nitroso-glutathione reductase by catalyzing the NADPH-dependent reduction of S-nitrosoglutathione. Displays no reductase activity towards retinoids. The protein is Aldo-keto reductase family 1 member A1 (Akr1a1) of Rattus norvegicus (Rat).